Reading from the N-terminus, the 570-residue chain is PTS system lactose-specific EIICB component (570 aa).

A PTS EIIC type-3 domain is found at Ile9–Phe410. The next 9 membrane-spanning stretches (helical) occupy residues Gly31 to Val51, Ala65 to Thr85, Ile104 to Pro124, Ala133 to Val153, Phe178 to Ile198, Gly223 to His243, Met283 to Trp303, Val340 to Val360, and Ile382 to Val402. In terms of domain architecture, PTS EIIB type-3 spans Gln467–Asn570. Residue Cys474 is the Phosphocysteine intermediate; for EIIB activity of the active site. Phosphocysteine; by EIIA is present on Cys474.

It is found in the cell membrane. It catalyses the reaction lactose(out) + N(pros)-phospho-L-histidyl-[protein] = lactose 6-phosphate(in) + L-histidyl-[protein]. In terms of biological role, the phosphoenolpyruvate-dependent sugar phosphotransferase system (sugar PTS), a major carbohydrate active transport system, catalyzes the phosphorylation of incoming sugar substrates concomitantly with their translocation across the cell membrane. The enzyme II LacEF PTS system is involved in lactose transport, but can also use galactose, isopropyl beta-thio-galactopyranoside and thiomethyl beta-D-galactopyranoside (TMG) as substrates. This is PTS system lactose-specific EIICB component from Staphylococcus aureus.